A 173-amino-acid chain; its full sequence is Ferric citrate uptake sigma factor FecI (173 aa).

The Polymerase core binding signature appears at 40–52 (DIAQDTFLRVMVS). Positions 139-158 (YSEIAHKLGVSISSVKKYVA) form a DNA-binding region, H-T-H motif.

The protein belongs to the sigma-70 factor family. ECF subfamily. In terms of assembly, interacts with FecR (via cytoplasmic N-terminus).

Its function is as follows. Sigma factors are initiation factors that promote the attachment of RNA polymerase to specific initiation sites and are then released. This sigma factor regulates transcriptional activation of the fecABCDE operon which mediates ferric citrate transport. The chain is Ferric citrate uptake sigma factor FecI (fecI) from Escherichia coli (strain K12).